We begin with the raw amino-acid sequence, 443 residues long: MFLAQEIIRKKRNAEALSKEEIQFFVKGITDNTVSEGQIAALGMAVYFNDMNMDERIALTTSMRDSGTVLNWKSLDLDGPIIDKHSTGGVGDVISLMLGPMAAACGGYVPMISGRGLGHTGGTLDKFDAIPGYQTEPDSALFRKVVKEAGVAIIGQTGDLVPADKRFYSIRDNTATVESISLITASILSKKLAAGLDALAMDVKVGSGAFMPTYEASEELARSITAVANGAGTKTTALLTDMNQVLASCAGNAVEVKEAVDFLTGAYRNPRLYEVTMGLCAEMLQLGGIASSEAEAREKLNRVLDNGKAAEIFGRMISGLGGPADFIENTGLYLPESKIIRPVYADQTGFASAMDTRELGLAVVTLGGGRRKPGDALDYSVGLTKVCALGDEISADKPIAFIHAQTENAFAEAEAAVKKAIHVGETKPEKTPEIYRYIRESDL.

Belongs to the thymidine/pyrimidine-nucleoside phosphorylase family. Homodimer.

The catalysed reaction is thymidine + phosphate = 2-deoxy-alpha-D-ribose 1-phosphate + thymine. It functions in the pathway pyrimidine metabolism; dTMP biosynthesis via salvage pathway; dTMP from thymine: step 1/2. Its function is as follows. The enzymes which catalyze the reversible phosphorolysis of pyrimidine nucleosides are involved in the degradation of these compounds and in their utilization as carbon and energy sources, or in the rescue of pyrimidine bases for nucleotide synthesis. This Shewanella sediminis (strain HAW-EB3) protein is Thymidine phosphorylase.